Consider the following 158-residue polypeptide: Phosphopantetheine adenylyltransferase (158 aa).

Thr9 contributes to the substrate binding site. ATP contacts are provided by residues 9-10 and His17; that span reads TF. Lys41, Leu73, and Arg87 together coordinate substrate. Residues 88–90, Glu98, and 123–129 each bind ATP; these read GVR and WSYVSST.

This sequence belongs to the bacterial CoaD family. Homohexamer. The cofactor is Mg(2+).

It is found in the cytoplasm. It catalyses the reaction (R)-4'-phosphopantetheine + ATP + H(+) = 3'-dephospho-CoA + diphosphate. It functions in the pathway cofactor biosynthesis; coenzyme A biosynthesis; CoA from (R)-pantothenate: step 4/5. In terms of biological role, reversibly transfers an adenylyl group from ATP to 4'-phosphopantetheine, yielding dephospho-CoA (dPCoA) and pyrophosphate. In Histophilus somni (strain 129Pt) (Haemophilus somnus), this protein is Phosphopantetheine adenylyltransferase.